The sequence spans 956 residues: Dual specificity protein kinase YAK1 homolog (956 aa).

Residues 122 to 464 (YIVKDLLGHG…PFQAAKHPFI (343 aa)) enclose the Protein kinase domain. ATP-binding positions include 128–136 (LGHGTFGQV) and Lys-151. Ser-222 carries the phosphoserine modification. The active-site Proton acceptor is Asp-249. 3 disordered regions span residues 620-657 (LGTS…HGSP), 672-781 (SAGY…NYSD), and 806-956 (GSTD…GSIA). The span at 622-636 (TSPSQFTPNTNNQFL) shows a compositional bias: polar residues. Residues 672–691 (SAGYSGGSQSQDSSLSQAQG) show a composition bias toward low complexity. Composition is skewed to polar residues over residues 697–713 (FYQN…SPSR), 725–757 (QTQG…SSTA), and 806–817 (GSTDASSYSRRF). Low complexity predominate over residues 818–830 (NSNASTSSSNPTT). Composition is skewed to polar residues over residues 838-849 (QAFSQVETGSPP), 870-884 (VSQN…QPPQ), and 902-912 (MNAQLPPSNTN). A compositionally biased stretch (low complexity) spans 913 to 924 (SGGQQRSPRSSS). The span at 937–947 (NHVPNVPSTSH) shows a compositional bias: polar residues.

Belongs to the protein kinase superfamily. Ser/Thr protein kinase family. In terms of processing, autophosphorylated at Ser-222.

The catalysed reaction is L-seryl-[protein] + ATP = O-phospho-L-seryl-[protein] + ADP + H(+). The enzyme catalyses L-threonyl-[protein] + ATP = O-phospho-L-threonyl-[protein] + ADP + H(+). It carries out the reaction L-tyrosyl-[protein] + ATP = O-phospho-L-tyrosyl-[protein] + ADP + H(+). Its function is as follows. Dual specificity protein kinase that phosphorylates ANN1, ANN2 and CP29B at serine and threonine residues, and ANN1, ANN2 and ANN4 at tyrosine residues. May regulate the phosphorylation status of annexin proteins. Acts as a positive regulator in abscisic acid (ABA)-mediated regulation of postgermination growth and drought response. May regulate the expression of ABA-responsive genes such as RD22, RD29A, LTI65/RD29B and RAB18. The protein is Dual specificity protein kinase YAK1 homolog of Arabidopsis thaliana (Mouse-ear cress).